The following is a 403-amino-acid chain: Argininosuccinate synthase (403 aa).

ATP-binding positions include 10–18 (AYSGGVDTS) and Ala-38. Tyr-89 provides a ligand contact to L-citrulline. Gly-119 contributes to the ATP binding site. L-aspartate-binding residues include Thr-121, Asn-125, and Asp-126. Asn-125 is an L-citrulline binding site. Arg-129, Ser-177, Ser-186, Glu-262, and Tyr-274 together coordinate L-citrulline.

Belongs to the argininosuccinate synthase family. Type 1 subfamily. Homotetramer.

The protein resides in the cytoplasm. The enzyme catalyses L-citrulline + L-aspartate + ATP = 2-(N(omega)-L-arginino)succinate + AMP + diphosphate + H(+). The protein operates within amino-acid biosynthesis; L-arginine biosynthesis; L-arginine from L-ornithine and carbamoyl phosphate: step 2/3. This Synechococcus sp. (strain CC9902) protein is Argininosuccinate synthase.